Reading from the N-terminus, the 514-residue chain is Serine--tRNA ligase, cytoplasmic (514 aa).

At M1 the chain carries N-acetylmethionine. Residues R9–S61 are interaction with tRNA. The residue at position 241 (S241) is a Phosphoserine. Residues T271 and R302 each contribute to the L-serine site. Residues R302–E304 and V318–F321 each bind ATP. An N6-acetyllysine modification is found at K323. E325 contacts L-serine. E391–S394 serves as a coordination point for ATP. N427 provides a ligand contact to L-serine. The tract at residues V471–A514 is disordered. Residues E479 to L502 show a composition bias toward basic and acidic residues. The short motif at K482 to K494 is the Nuclear localization signal element. Residues R505–A514 show a composition bias toward polar residues.

Belongs to the class-II aminoacyl-tRNA synthetase family. Type-1 seryl-tRNA synthetase subfamily. As to quaternary structure, homodimer. The tRNA molecule may bind across the dimer. Interacts with SIRT2. Interacts with METTL6; interaction is required for the tRNA N(3)-methylcytidine methyltransferase activity of METTL6.

The protein localises to the cytoplasm. It is found in the nucleus. It catalyses the reaction tRNA(Ser) + L-serine + ATP = L-seryl-tRNA(Ser) + AMP + diphosphate + H(+). It carries out the reaction tRNA(Sec) + L-serine + ATP = L-seryl-tRNA(Sec) + AMP + diphosphate + H(+). It participates in aminoacyl-tRNA biosynthesis; selenocysteinyl-tRNA(Sec) biosynthesis; L-seryl-tRNA(Sec) from L-serine and tRNA(Sec): step 1/1. In terms of biological role, catalyzes the attachment of serine to tRNA(Ser) in a two-step reaction: serine is first activated by ATP to form Ser-AMP and then transferred to the acceptor end of tRNA(Ser). Is probably also able to aminoacylate tRNA(Sec) with serine, to form the misacylated tRNA L-seryl-tRNA(Sec), which will be further converted into selenocysteinyl-tRNA(Sec). In the nucleus, binds to the VEGFA core promoter and prevents MYC binding and transcriptional activation by MYC. Recruits SIRT2 to the VEGFA promoter, promoting deacetylation of histone H4 at 'Lys-16' (H4K16). Thereby, inhibits the production of VEGFA and sprouting angiogenesis mediated by VEGFA. This Macaca fascicularis (Crab-eating macaque) protein is Serine--tRNA ligase, cytoplasmic (SARS1).